Consider the following 275-residue polypeptide: Glucosamine-6-phosphate deaminase 2 (275 aa).

Aspartate 72 serves as the catalytic Proton acceptor; for enolization step. Positions 102–131 (NNAHILDGNASDLQAECEDFERKIKEAGGI) form a coiled coil. Aspartate 141 functions as the For ring-opening step in the catalytic mechanism. Histidine 143 functions as the Proton acceptor; for ring-opening step in the catalytic mechanism. Glutamate 148 serves as the catalytic For ring-opening step.

It belongs to the glucosamine/galactosamine-6-phosphate isomerase family. Homohexamer.

It localises to the cytoplasm. It catalyses the reaction alpha-D-glucosamine 6-phosphate + H2O = beta-D-fructose 6-phosphate + NH4(+). Functionally, catalyzes the reversible conversion of alpha-D-glucosamine 6-phosphate (GlcN-6P) into beta-D-fructose 6-phosphate (Fru-6P) and ammonium ion, a regulatory reaction step in de novo uridine diphosphate-N-acetyl-alpha-D-glucosamine (UDP-GlcNAc) biosynthesis via hexosamine pathway. The sequence is that of Glucosamine-6-phosphate deaminase 2 from Xenopus laevis (African clawed frog).